The chain runs to 320 residues: MEEVPHDCPGADSAQAGRGASCQGCPNQRLCASGAGAAADPAIEEIKEKMKTVKHKILVLSGKGGVGKSTFSAHLAHGLAEDENTQVALLDIDICGPSIPKIMGLEGEQVHQSGSGWSPVFLEDNLGVMSVGFLLSSPDDAVIWRGPKKNGMIKQFLRDVDWGEVDYLIVDTPPGTSDEHLSVVQYLTAAHIDGAVIITTPQEVSLQDVRKEISFCHKVKLPIIGVVENMSGFICPKCQKESQIFPPTTGGAEAMCQDLKIPLLGKVPLDPRIGKSCDKGQSFLVEAPDSPATVAYRSIIQRIQEFCSQRLPEGENLVGS.

Position 1 is an N-acetylmethionine (M1). [4Fe-4S] cluster-binding residues include C8, C22, C25, and C31. 62–69 (GKGGVGKS) is an ATP binding site. Residues C235 and C238 each contribute to the [4Fe-4S] cluster site.

It belongs to the Mrp/NBP35 ATP-binding proteins family. NUBP1/NBP35 subfamily. Heterotetramer of 2 NUBP1 and 2 NUBP2 chains. Interacts with KIFC1. Interacts with the BBS/CCT complex subunit CCT1. [4Fe-4S] cluster is required as a cofactor.

Its subcellular location is the cytoplasm. It is found in the nucleus. It localises to the cell projection. The protein localises to the cytoskeleton. The protein resides in the cilium axoneme. Its subcellular location is the cilium basal body. It is found in the microtubule organizing center. It localises to the centrosome. The protein localises to the centriole. Its function is as follows. Component of the cytosolic iron-sulfur (Fe/S) protein assembly (CIA) machinery. Required for maturation of extramitochondrial Fe-S proteins. The NUBP1-NUBP2 heterotetramer forms a Fe-S scaffold complex, mediating the de novo assembly of an Fe-S cluster and its transfer to target apoproteins. Implicated in the regulation of centrosome duplication. Negatively regulates cilium formation and structure. In Bos taurus (Bovine), this protein is Cytosolic Fe-S cluster assembly factor NUBP1.